A 365-amino-acid chain; its full sequence is Carbamoyl phosphate synthase small chain (365 aa).

CPSase stretches follow at residues methionine 1–glycine 166 and methionine 1–histidine 169. L-glutamine contacts are provided by serine 45, glycine 218, and glycine 220. Positions arginine 170–glutamate 357 constitute a Glutamine amidotransferase type-1 domain. Residue cysteine 245 is the Nucleophile of the active site. Residues leucine 246, glutamine 249, asparagine 287, glycine 289, and tyrosine 290 each coordinate L-glutamine. Residues histidine 330 and glutamate 332 contribute to the active site.

This sequence belongs to the CarA family. Composed of two chains; the small (or glutamine) chain promotes the hydrolysis of glutamine to ammonia, which is used by the large (or ammonia) chain to synthesize carbamoyl phosphate. Tetramer of heterodimers (alpha,beta)4.

The catalysed reaction is hydrogencarbonate + L-glutamine + 2 ATP + H2O = carbamoyl phosphate + L-glutamate + 2 ADP + phosphate + 2 H(+). It carries out the reaction L-glutamine + H2O = L-glutamate + NH4(+). It functions in the pathway amino-acid biosynthesis; L-arginine biosynthesis; carbamoyl phosphate from bicarbonate: step 1/1. Its pathway is pyrimidine metabolism; UMP biosynthesis via de novo pathway; (S)-dihydroorotate from bicarbonate: step 1/3. Its function is as follows. Small subunit of the glutamine-dependent carbamoyl phosphate synthetase (CPSase). CPSase catalyzes the formation of carbamoyl phosphate from the ammonia moiety of glutamine, carbonate, and phosphate donated by ATP, constituting the first step of 2 biosynthetic pathways, one leading to arginine and/or urea and the other to pyrimidine nucleotides. The small subunit (glutamine amidotransferase) binds and cleaves glutamine to supply the large subunit with the substrate ammonia. This Bacillus anthracis protein is Carbamoyl phosphate synthase small chain.